The sequence spans 507 residues: Peroxisomal catalase (507 aa).

Residues His-65 and Asn-138 contribute to the active site. Residue Tyr-348 participates in heme binding. The short motif at 505-507 is the Microbody targeting signal element; it reads SKI.

Belongs to the catalase family. As to quaternary structure, homotetramer. Requires heme as cofactor.

It is found in the peroxisome matrix. The catalysed reaction is 2 H2O2 = O2 + 2 H2O. Catalyzes the degradation of hydrogen peroxide (H(2)O(2)) generated by peroxisomal oxidases to water and oxygen, thereby protecting cells from the toxic effects of hydrogen peroxide. The chain is Peroxisomal catalase (PXP9) from Pichia angusta (Yeast).